Consider the following 237-residue polypeptide: uncharacterized protein (237 aa).

21–28 (GCDGSGKS) lines the ATP pocket.

The protein to E.coli YghR and YghT.

This is an uncharacterized protein from Escherichia coli (strain K12).